The primary structure comprises 1640 residues: Clathrin heavy chain 2 (1640 aa).

Position 2 is an N-acetylalanine (alanine 2). Residues 2 to 479 (AQILPVRFQE…TDPMLALSVY (478 aa)) form a globular terminal domain region. WD40-like repeat stretches follow at residues 24 to 67 (NIGF…RPIS), 68 to 107 (AESAIMNPASKVIALKAGKTLQIFNIEMKSKMKAHTMAEE), 108 to 149 (VIFW…TSLV), 150 to 195 (GCQV…QPIE), 196 to 257 (GHAA…PEAQ), 258 to 301 (NDFP…ISAD), and 302 to 330 (TIFVTAPHKPTSGIIGVNKKGQVLSVCVE). Serine 67 carries the phosphoserine modification. Position 184 is a phosphotyrosine (tyrosine 184). Threonine 394 is modified (phosphothreonine). A binding site for the uncoating ATPase, involved in lattice disassembly region spans residues 449-465 (EKWLKEDKLECSEELGD). Positions 480 to 523 (LRANVPSKVIQCFAETGQFQKIVLYAKKVGYTPDWIFLLRGVMK) are flexible linker. Positions 524–634 (ISPEQGLQFS…QALEHYTDLY (111 aa)) are distal segment. The segment at 524–1640 (ISPEQGLQFS…PLVFDFDGHE (1117 aa)) is heavy chain arm. CHCR repeat units follow at residues 537-683 (VQDE…QLCV), 686-828 (ASKY…SEEV), 833-972 (IMAV…QLID), 979-1124 (LSET…VKEA), 1128-1269 (YIRG…FRFA), 1274-1420 (LHIV…LLIN), and 1423-1566 (LLVL…RECF). Residue tyrosine 634 is modified to Phosphotyrosine. The interval 639-1640 (AVVHTHLLNP…PLVFDFDGHE (1002 aa)) is proximal segment. N6-succinyllysine is present on lysine 737. The residue at position 856 (lysine 856) is an N6-acetyllysine. Tyrosine 899 is subject to Phosphotyrosine. Residue serine 1167 is modified to Phosphoserine. A Phosphotyrosine modification is found at tyrosine 1206. The interval 1213–1522 (AAKLLYSNVS…YLYKGNNWWA (310 aa)) is involved in binding clathrin light chain. Residue serine 1229 is modified to Phosphoserine. Lysine 1441 carries the N6-acetyllysine; alternate modification. Lysine 1441 is subject to N6-succinyllysine; alternate. Phosphotyrosine occurs at positions 1477 and 1487. Serine 1494 carries the post-translational modification Phosphoserine. At lysine 1501 the chain carries N6-acetyllysine. The tract at residues 1551 to 1640 (QKLLQWFLEE…PLVFDFDGHE (90 aa)) is trimerization.

It belongs to the clathrin heavy chain family. In terms of assembly, clathrin triskelions, composed of 3 heavy chains and 3 light chains, are the basic subunits of the clathrin coat. In the presence of light chains, hub assembly is influenced by both the pH and the concentration of calcium. May interact with OCRL. Interacts with AFTPH/aftiphilin. As to expression, maximal levels in skeletal muscle. High levels in heart and testis. Low expression detected in all other tissues.

The protein localises to the cytoplasmic vesicle membrane. It localises to the membrane. It is found in the coated pit. Its function is as follows. Clathrin is the major protein of the polyhedral coat of coated pits and vesicles. Two different adapter protein complexes link the clathrin lattice either to the plasma membrane or to the trans-Golgi network. The protein is Clathrin heavy chain 2 (CLTCL1) of Homo sapiens (Human).